The following is a 363-amino-acid chain: Ribosomal RNA large subunit methyltransferase M (363 aa).

S-adenosyl-L-methionine contacts are provided by residues Ser194, Cys227–Gly230, Asp246, Asp266, and Asp284. The active-site Proton acceptor is the Lys313.

The protein belongs to the class I-like SAM-binding methyltransferase superfamily. RNA methyltransferase RlmE family. RlmM subfamily. In terms of assembly, monomer.

It is found in the cytoplasm. It carries out the reaction cytidine(2498) in 23S rRNA + S-adenosyl-L-methionine = 2'-O-methylcytidine(2498) in 23S rRNA + S-adenosyl-L-homocysteine + H(+). Its function is as follows. Catalyzes the 2'-O-methylation at nucleotide C2498 in 23S rRNA. This Haemophilus influenzae (strain ATCC 51907 / DSM 11121 / KW20 / Rd) protein is Ribosomal RNA large subunit methyltransferase M.